Reading from the N-terminus, the 246-residue chain is Nuclear transcription factor Y subunit C-2 (246 aa).

Disordered stretches follow at residues 1 to 35 (MDNQQLPYAGQPAAAGAGAPVPGVPGAGGPPAVPH) and 205 to 246 (QQGA…PSSE). Residues 9-21 (AGQPAAAGAGAPV) show a composition bias toward low complexity.

It belongs to the NFYC/HAP5 subunit family. As to quaternary structure, heterotrimeric transcription factor composed of three components, NF-YA, NF-YB and NF-YC. NF-YB and NF-YC must interact and dimerize for NF-YA association and DNA binding. Interacts with NFYB8, NFYB10 and HD5/NFYB11.

It is found in the nucleus. It localises to the cytoplasm. Probable transcription factor involved in the regulation of flowering time under long day (LD) conditions. Functions as a repressor of flowering, independently of HD1 and GHD7. Controls flowering time by negatively regulating the expression of EHD1 and HD3A. Component of the NF-Y/HAP transcription factor complex. The protein is Nuclear transcription factor Y subunit C-2 of Oryza sativa subsp. japonica (Rice).